Reading from the N-terminus, the 283-residue chain is Non-selective voltage-gated ion channel VDAC1 (283 aa).

The residue at position 2 (A2) is an N-acetylalanine. ATP is bound at residue K12. Residue K12 forms a Glycyl lysine isopeptide (Lys-Gly) (interchain with G-Cter in ubiquitin) linkage. A Phosphoserine modification is found at S13. Position 19 is a phosphothreonine (T19). K20 lines the ATP pocket. Position 20 is an N6-acetyllysine; alternate (K20). K20 carries the N6-succinyllysine; alternate modification. Residue K20 forms a Glycyl lysine isopeptide (Lys-Gly) (interchain with G-Cter in ubiquitin); alternate linkage. The next 2 membrane-spanning stretches (beta stranded) occupy residues 26-35 and 39-47; these read LIKLDLKTKS and LEFTSSGSA. Residues K53 and K61 each participate in a glycyl lysine isopeptide (Lys-Gly) (interchain with G-Cter in ubiquitin) cross-link. Residues 54–64 form a beta stranded membrane-spanning segment; sequence VTGSLETKYRW. Position 67 is a phosphotyrosine (Y67). Transmembrane regions (beta stranded) follow at residues 69–76, 80–89, and 95–104; these read LTFTEKWN, TLGTEITVED, and LKLTFDSSFS. Residue T107 is modified to Phosphothreonine. Position 109 is an N6-acetyllysine; alternate (K109). K109 is covalently cross-linked (Glycyl lysine isopeptide (Lys-Gly) (interchain with G-Cter in ubiquitin); alternate). K110 participates in a covalent cross-link: Glycyl lysine isopeptide (Lys-Gly) (interchain with G-Cter in ubiquitin). Beta stranded transmembrane passes span 111–120, 123–130, 137–145, and 150–158; these read NAKIKTGYKR, INLGCDVD, SIRGALVLG, and LAGYQMNFE. A Glycyl lysine isopeptide (Lys-Gly) (interchain with G-Cter in ubiquitin) cross-link involves residue K161. 6 consecutive transmembrane segments (beta stranded) span residues 163–175, 178–185, 189–198, 202–211, 218–227, and 231–238; these read RVTQ…GYKT, FQLHTNVN, EFGGSIYQKV, LETAVNLAWT, RFGIAAKYQI, and ACFSAKVN. At S193 the chain carries Phosphoserine; by NEK1. S240 is modified (phosphoserine). 242–244 contacts NAD(+); the sequence is LIG. Residues 242–251 traverse the membrane as a beta stranded segment; that stretch reads LIGLGYTQTL. K252 bears the N6-acetyllysine mark. The beta stranded transmembrane segment at 254-263 threads the bilayer; the sequence is GIKLTLSALL. Position 260–264 (260–264) interacts with NAD(+); that stretch reads SALLD. An N6-acetyllysine; alternate modification is found at K266. A Glycyl lysine isopeptide (Lys-Gly) (interchain with G-Cter in ubiquitin); alternate cross-link involves residue K266. A beta stranded transmembrane segment spans residues 273–282; the sequence is HKLGLGLEFQ. A Glycyl lysine isopeptide (Lys-Gly) (interchain with G-Cter in ubiquitin) cross-link involves residue K274.

This sequence belongs to the eukaryotic mitochondrial porin family. Homodimer and homotrimer; in response to cyclic AMP or calcium; oligomerization is required for scramblase activity. Component of the mitochondrial permeability transition pore complex (mPTPC), at least composed of SPG7, VDAC1 and PPIF. Interacts with SPG7, NIPSNAP2 and SLC25A30. Interacts with hexokinases including HK1. The HK1-VDAC1 complex interacts with ATF2. Interacts with BCL2L1. Interacts with BAK1. Interacts with RTL10/BOP (via BH3 domain). Interacts with amyloid-beta and APP; induces VDAC1 dephosphorylation. Interacts with TMEM41B. Interacts with BCAP31. Interacts with HSPA9; this interaction couples ITPR1 to VDAC1. Post-translationally, phosphorylation at Ser-193 by NEK1 promotes the closed conformational state preventing excessive mitochondrial membrane permeability and subsequent apoptotic cell death after injury. Phosphorylation by the AKT-GSK3B axis stabilizes the protein probably by preventing ubiquitin-mediated proteasomal degradation. Ubiquitinated. Undergoes monoubiquitination and polyubiquitination by PRKN; monoubiquitination at Lys-274 inhibits apoptosis, whereas polyubiquitination leads to its degradation and promotes mitophagy. Deubiquitinated by USP30. Predominantly in brain astrocytes.

It is found in the mitochondrion outer membrane. Its subcellular location is the cell membrane. It localises to the membrane raft. It carries out the reaction chloride(in) = chloride(out). It catalyses the reaction K(+)(in) = K(+)(out). The catalysed reaction is ATP(in) = ATP(out). The enzyme catalyses Ca(2+)(in) = Ca(2+)(out). It carries out the reaction Na(+)(in) = Na(+)(out). It catalyses the reaction Mg(2+)(in) = Mg(2+)(out). The catalysed reaction is L-glutamate(out) = L-glutamate(in). The enzyme catalyses dopamine(out) = dopamine(in). It carries out the reaction acetylcholine(in) = acetylcholine(out). It catalyses the reaction Fe(III)-[cytochrome c](out) = Fe(III)-[cytochrome c](in). The catalysed reaction is a 1,2-diacyl-sn-glycero-3-phosphocholine(in) = a 1,2-diacyl-sn-glycero-3-phosphocholine(out). The enzyme catalyses a 1,2-diacyl-sn-glycero-3-phospho-L-serine(in) = a 1,2-diacyl-sn-glycero-3-phospho-L-serine(out). With respect to regulation, inhibited by nitric oxide. In terms of biological role, non-selective voltage-gated ion channel that mediates the transport of anions and cations through the mitochondrion outer membrane and plasma membrane. The channel at the outer mitochondrial membrane allows diffusion of small hydrophilic molecules; in the plasma membrane it is involved in cell volume regulation and apoptosis. It adopts an open conformation at low or zero membrane potential and a closed conformation at potentials above 30-40 mV. The open state has a weak anion selectivity whereas the closed state is cation-selective. Binds various signaling molecules, including the sphingolipid ceramide, the phospholipid phosphatidylcholine, and the sterols cholesterol and oxysterol. In depolarized mitochondria, acts downstream of PRKN and PINK1 to promote mitophagy or prevent apoptosis; polyubiquitination by PRKN promotes mitophagy, while monoubiquitination by PRKN decreases mitochondrial calcium influx which ultimately inhibits apoptosis. May participate in the formation of the permeability transition pore complex (PTPC) responsible for the release of mitochondrial products that triggers apoptosis. May mediate ATP export from cells. Part of a complex composed of HSPA9, ITPR1 and VDAC1 that regulates mitochondrial calcium-dependent apoptosis by facilitating calcium transport from the ER lumen to the mitochondria intermembrane space thus providing calcium for the downstream calcium channel MCU that directly releases it into mitochondria matrix. Mediates cytochrome c efflux. Functionally, catalyzes the scrambling of phospholipids across the outer mitochondrial membrane; the mechanism is unrelated to channel activity and is capable of translocating both anionic and zwitterionic phospholipids. In Bos taurus (Bovine), this protein is Non-selective voltage-gated ion channel VDAC1.